The following is a 1616-amino-acid chain: Replicase large subunit (1616 aa).

Residues 50–458 (FSKVVSEEQT…QSLSMTFFLH (409 aa)) form a methyltransferase region. One can recognise an Alphavirus-like MT domain in the interval 72-281 (TFYNTQNAVH…HSYSNILKYV (210 aa)). The (+)RNA virus helicase ATP-binding domain occupies 801 to 963 (VVYSDMAKLR…KLEVDEVETR (163 aa)). The interval 830 to 1085 (LVDGVPGCGK…RHTKSLKYYT (256 aa)) is helicase. ATP contacts are provided by residues 836-841 (GCGKTK), Arg868, 967-968 (LR), Arg1076, and 1097-1100 (DLER). One can recognise a (+)RNA virus helicase C-terminal domain in the interval 964–1116 (RTTLRCPADV…DMYKVDAGTQ (153 aa)). The 114-residue stretch at 1380–1493 (MDVLELDVSK…YFPKGCEYPD (114 aa)) folds into the RdRp catalytic domain.

This sequence belongs to the ssRNA positive-strand viruses RNA-directed RNA polymerase family. Heterodimer of a large and a small subunit. May interact with the host proteins TOM1 and ARL8. Interacts via an ATP bridge, with host protein Tm-1 (e.g. tomato Tm-1 AC A7M6E7).

It catalyses the reaction RNA(n) + a ribonucleoside 5'-triphosphate = RNA(n+1) + diphosphate. The enzyme catalyses ATP + H2O = ADP + phosphate + H(+). In resistant plants, is bound by host protein Tm-1 (e.g. tomato Tm-1 AC A7M6E7), thereby inhibiting replication complex activity. Functionally, is an RNA-dependent RNA polymerase active in viral RNA replication. In terms of biological role, is a methyltransferase active in RNA capping and an RNA helicase. Methyltransferase displays a cytoplasmic capping enzyme activity. This function is necessary since all viral RNAs are synthesized in the cytoplasm, and host capping enzymes are restricted to the nucleus. Helicase region probably exhibits NTPase and RNA unwinding activities (Potential). It also acts as a suppressor of RNA-mediated gene silencing, also known as post-transcriptional gene silencing (PTGS), a mechanism of plant viral defense that limits the accumulation of viral RNAs. May mediate silencing suppression through either inhibition of HEN1-mediated siRNA or siRNA demethylation. The polypeptide is Replicase large subunit (Tomato mosaic virus (strain L) (ToMV)).